A 251-amino-acid polypeptide reads, in one-letter code: Vacuolar protein sorting-associated protein 37D (251 aa).

One can recognise a VPS37 C-terminal domain in the interval 93–182; that stretch reads AENCADKLQR…RRRERSAQPA (90 aa). The disordered stretch occupies residues 174 to 251; the sequence is RRERSAQPAP…RPSQPEPPHR (78 aa). The segment covering 221 to 251 has biased composition (pro residues); that stretch reads PVPPLKGSPGCPLGPAPLLSPRPSQPEPPHR.

Belongs to the VPS37 family. Component of the ESCRT-I complex (endosomal sorting complex required for transport I) which consists of TSG101, VPS28, a VPS37 protein (VPS37A to -D) and MVB12A or MVB12B in a 1:1:1:1 stoichiometry. Interacts with TSG101 and MVB12A. Component of the ESCRT-I complex (endosomal sorting complex required for transport I) which consists of TSG101, VPS28, a VPS37 protein (VPS37A to -D) and UBAP1 in a 1:1:1:1 stoichiometry.

The protein resides in the late endosome membrane. Functionally, component of the ESCRT-I complex, a regulator of vesicular trafficking process. Required for the sorting of endocytic ubiquitinated cargos into multivesicular bodies. May be involved in cell growth and differentiation. The polypeptide is Vacuolar protein sorting-associated protein 37D (Homo sapiens (Human)).